The primary structure comprises 159 residues: ATP synthase subunit b 2 (159 aa).

The chain crosses the membrane as a helical span at residues 1–21; sequence MDATFWAFIALVIFVAIVVYM.

This sequence belongs to the ATPase B chain family. In terms of assembly, F-type ATPases have 2 components, F(1) - the catalytic core - and F(0) - the membrane proton channel. F(1) has five subunits: alpha(3), beta(3), gamma(1), delta(1), epsilon(1). F(0) has three main subunits: a(1), b(2) and c(10-14). The alpha and beta chains form an alternating ring which encloses part of the gamma chain. F(1) is attached to F(0) by a central stalk formed by the gamma and epsilon chains, while a peripheral stalk is formed by the delta and b chains.

It localises to the cell inner membrane. F(1)F(0) ATP synthase produces ATP from ADP in the presence of a proton or sodium gradient. F-type ATPases consist of two structural domains, F(1) containing the extramembraneous catalytic core and F(0) containing the membrane proton channel, linked together by a central stalk and a peripheral stalk. During catalysis, ATP synthesis in the catalytic domain of F(1) is coupled via a rotary mechanism of the central stalk subunits to proton translocation. Its function is as follows. Component of the F(0) channel, it forms part of the peripheral stalk, linking F(1) to F(0). This chain is ATP synthase subunit b 2, found in Brucella suis (strain ATCC 23445 / NCTC 10510).